The chain runs to 348 residues: Protein RecA (348 aa).

Residue 64-71 coordinates ATP; the sequence is GPESSGKT.

It belongs to the RecA family.

The protein localises to the cytoplasm. Functionally, can catalyze the hydrolysis of ATP in the presence of single-stranded DNA, the ATP-dependent uptake of single-stranded DNA by duplex DNA, and the ATP-dependent hybridization of homologous single-stranded DNAs. It interacts with LexA causing its activation and leading to its autocatalytic cleavage. The chain is Protein RecA from Blastochloris viridis (Rhodopseudomonas viridis).